We begin with the raw amino-acid sequence, 196 residues long: Holliday junction branch migration complex subunit RuvA (196 aa).

The domain I stretch occupies residues 1–63 (MYEYFKGIIS…EDAELLYGFA (63 aa)). A domain II region spans residues 64–142 (TEEEKQLFLS…AAGSPAESKA (79 aa)). Residues 143-146 (PVQT) are flexible linker. Residues 147–196 (ADNQELEEAMEAMLALGYKAAELKKIKKFFEGTTDTAENYIKSALKMLVK) form a domain III region.

Belongs to the RuvA family. Homotetramer. Forms an RuvA(8)-RuvB(12)-Holliday junction (HJ) complex. HJ DNA is sandwiched between 2 RuvA tetramers; dsDNA enters through RuvA and exits via RuvB. An RuvB hexamer assembles on each DNA strand where it exits the tetramer. Each RuvB hexamer is contacted by two RuvA subunits (via domain III) on 2 adjacent RuvB subunits; this complex drives branch migration. In the full resolvosome a probable DNA-RuvA(4)-RuvB(12)-RuvC(2) complex forms which resolves the HJ.

It is found in the cytoplasm. In terms of biological role, the RuvA-RuvB-RuvC complex processes Holliday junction (HJ) DNA during genetic recombination and DNA repair, while the RuvA-RuvB complex plays an important role in the rescue of blocked DNA replication forks via replication fork reversal (RFR). RuvA specifically binds to HJ cruciform DNA, conferring on it an open structure. The RuvB hexamer acts as an ATP-dependent pump, pulling dsDNA into and through the RuvAB complex. HJ branch migration allows RuvC to scan DNA until it finds its consensus sequence, where it cleaves and resolves the cruciform DNA. This is Holliday junction branch migration complex subunit RuvA from Streptococcus sanguinis (strain SK36).